The primary structure comprises 410 residues: Caspase-1 (410 aa).

The 91-residue stretch at 1 to 91 folds into the CARD domain; that stretch reads MADKVLKGKR…HLAETLGLSS (91 aa). A propeptide spanning residues 1 to 119 is cleaved from the precursor; sequence MADKVLKGKR…PLPASVNNMP (119 aa). Residues 88–104 are compositionally biased toward polar residues; the sequence is GLSSSPQSGNSQNTTDS. Residues 88-125 form a disordered region; sequence GLSSSPQSGNSQNTTDSEVAFPPLPASVNNMPGPAEPE. Residues histidine 235 and cysteine 284 contribute to the active site. Positions 297–322 are excised as a propeptide; the sequence is SPAAPMDSTSQMGSSLSQVGDNLEDD.

The protein belongs to the peptidase C14A family. As to quaternary structure, heterotetramer that consists of two anti-parallel arranged heterodimers, each one formed by a 20 kDa (Caspase-1 subunit p20) and a 10 kDa (Caspase-1 subunit p10) subunit. May be a component of the inflammasome, a protein complex which also includes PYCARD, CARD8 and NLRP2 and whose function would be the activation of pro-inflammatory caspases. Component of the AIM2 PANoptosome complex, a multiprotein complex that drives inflammatory cell death (PANoptosis). Both the p10 and p20 subunits interact with MEFV. Interacts with CARD17P/INCA and CARD18. Interacts with SERPINB1; this interaction regulates CASP1 activity. Heterotetramer that consists of two anti-parallel arranged heterodimers, each one formed by a 20 kDa (Caspase-1 subunit p20) and a 10 kDa (Caspase-1 subunit p10) subunit. The two subunits are derived from the precursor sequence by an autocatalytic mechanism. Post-translationally, ubiquitinated via 'Lys-11'-linked polyubiquitination. Deubiquitinated by USP8.

It localises to the cytoplasm. The protein resides in the cell membrane. The catalysed reaction is Strict requirement for an Asp residue at position P1 and has a preferred cleavage sequence of Tyr-Val-Ala-Asp-|-.. Its function is as follows. Thiol protease involved in a variety of inflammatory processes by proteolytically cleaving other proteins, such as the precursors of the inflammatory cytokines interleukin-1 beta (IL1B) and interleukin 18 (IL18) as well as the pyroptosis inducer Gasdermin-D (GSDMD), into active mature peptides. Plays a key role in cell immunity as an inflammatory response initiator: once activated through formation of an inflammasome complex, it initiates a pro-inflammatory response through the cleavage of the two inflammatory cytokines IL1B and IL18, releasing the mature cytokines which are involved in a variety of inflammatory processes. Cleaves a tetrapeptide after an Asp residue at position P1. Also initiates pyroptosis, a programmed lytic cell death pathway, through cleavage of GSDMD. In contrast to cleavage of interleukin IL1B, recognition and cleavage of GSDMD is not strictly dependent on the consensus cleavage site but depends on an exosite interface on CASP1 that recognizes and binds the Gasdermin-D, C-terminal (GSDMD-CT) part. Cleaves and activates CASP7 in response to bacterial infection, promoting plasma membrane repair. Upon inflammasome activation, during DNA virus infection but not RNA virus challenge, controls antiviral immunity through the cleavage of CGAS, rendering it inactive. In apoptotic cells, cleaves SPHK2 which is released from cells and remains enzymatically active extracellularly. The sequence is that of Caspase-1 (CASP1) from Felis catus (Cat).